We begin with the raw amino-acid sequence, 27 residues long: Pregnancy-associated glycoprotein 62 (27 aa).

Belongs to the peptidase A1 family. Glycosylated. Placenta.

The protein is Pregnancy-associated glycoprotein 62 (PAG62) of Capra hircus (Goat).